The sequence spans 154 residues: Deoxyuridine 5'-triphosphate nucleotidohydrolase (154 aa).

Substrate-binding positions include 64-66 (RSG), Asn77, 81-83 (TVD), and Lys91.

The protein belongs to the dUTPase family. In terms of assembly, homotrimer. Requires Mg(2+) as cofactor.

It catalyses the reaction dUTP + H2O = dUMP + diphosphate + H(+). The protein operates within pyrimidine metabolism; dUMP biosynthesis; dUMP from dCTP (dUTP route): step 2/2. Its function is as follows. This enzyme is involved in nucleotide metabolism: it produces dUMP, the immediate precursor of thymidine nucleotides and it decreases the intracellular concentration of dUTP so that uracil cannot be incorporated into DNA. In Mycobacterium leprae (strain Br4923), this protein is Deoxyuridine 5'-triphosphate nucleotidohydrolase.